Consider the following 91-residue polypeptide: Small ribosomal subunit protein uS19 (91 aa).

The protein belongs to the universal ribosomal protein uS19 family.

Functionally, protein S19 forms a complex with S13 that binds strongly to the 16S ribosomal RNA. This chain is Small ribosomal subunit protein uS19, found in Metamycoplasma arthritidis (strain 158L3-1) (Mycoplasma arthritidis).